Reading from the N-terminus, the 333-residue chain is Galactinol synthase 5 (333 aa).

Lysine 103 is a catalytic residue. Mn(2+)-binding residues include aspartate 119, aspartate 121, and histidine 257.

This sequence belongs to the glycosyltransferase 8 family. Galactosyltransferase subfamily. A divalent metal cation is required as a cofactor.

The protein localises to the cytoplasm. It carries out the reaction myo-inositol + UDP-alpha-D-galactose = alpha-D-galactosyl-(1-&gt;3)-1D-myo-inositol + UDP + H(+). Its function is as follows. Galactinol synthase involved in the biosynthesis of raffinose family oligosaccharides (RFOs) that function as osmoprotectants. May promote plant stress tolerance. This is Galactinol synthase 5 (GOLS5) from Arabidopsis thaliana (Mouse-ear cress).